The following is a 311-amino-acid chain: Phosphoribosylaminoimidazole-succinocarboxamide synthase (311 aa).

The protein belongs to the SAICAR synthetase family.

It catalyses the reaction 5-amino-1-(5-phospho-D-ribosyl)imidazole-4-carboxylate + L-aspartate + ATP = (2S)-2-[5-amino-1-(5-phospho-beta-D-ribosyl)imidazole-4-carboxamido]succinate + ADP + phosphate + 2 H(+). The protein operates within purine metabolism; IMP biosynthesis via de novo pathway; 5-amino-1-(5-phospho-D-ribosyl)imidazole-4-carboxamide from 5-amino-1-(5-phospho-D-ribosyl)imidazole-4-carboxylate: step 1/2. The protein is Phosphoribosylaminoimidazole-succinocarboxamide synthase of Azoarcus sp. (strain BH72).